The sequence spans 382 residues: Dual-specificity RNA methyltransferase RlmN (382 aa).

E96 functions as the Proton acceptor in the catalytic mechanism. A Radical SAM core domain is found at 102–342 (QGKRGTLCVS…VRTTRGEDID (241 aa)). A disulfide bridge connects residues C109 and C345. [4Fe-4S] cluster contacts are provided by C116, C120, and C123. S-adenosyl-L-methionine contacts are provided by residues 170 to 171 (GE), S202, 224 to 226 (SLH), and N302. Catalysis depends on C345, which acts as the S-methylcysteine intermediate.

The protein belongs to the radical SAM superfamily. RlmN family. It depends on [4Fe-4S] cluster as a cofactor.

Its subcellular location is the cytoplasm. The enzyme catalyses adenosine(2503) in 23S rRNA + 2 reduced [2Fe-2S]-[ferredoxin] + 2 S-adenosyl-L-methionine = 2-methyladenosine(2503) in 23S rRNA + 5'-deoxyadenosine + L-methionine + 2 oxidized [2Fe-2S]-[ferredoxin] + S-adenosyl-L-homocysteine. The catalysed reaction is adenosine(37) in tRNA + 2 reduced [2Fe-2S]-[ferredoxin] + 2 S-adenosyl-L-methionine = 2-methyladenosine(37) in tRNA + 5'-deoxyadenosine + L-methionine + 2 oxidized [2Fe-2S]-[ferredoxin] + S-adenosyl-L-homocysteine. Specifically methylates position 2 of adenine 2503 in 23S rRNA and position 2 of adenine 37 in tRNAs. m2A2503 modification seems to play a crucial role in the proofreading step occurring at the peptidyl transferase center and thus would serve to optimize ribosomal fidelity. This Pseudomonas savastanoi pv. phaseolicola (strain 1448A / Race 6) (Pseudomonas syringae pv. phaseolicola (strain 1448A / Race 6)) protein is Dual-specificity RNA methyltransferase RlmN.